Reading from the N-terminus, the 73-residue chain is Putative antitoxin M1627_0365 (73 aa).

This sequence belongs to the UPF0330 family.

In terms of biological role, possibly the antitoxin component of a type II toxin-antitoxin (TA) system. This Saccharolobus islandicus (strain M.16.27) (Sulfolobus islandicus) protein is Putative antitoxin M1627_0365.